We begin with the raw amino-acid sequence, 490 residues long: Ribulose bisphosphate carboxylase large chain (490 aa).

Substrate-binding residues include asparagine 127 and threonine 177. Lysine 179 acts as the Proton acceptor in catalysis. Lysine 181 provides a ligand contact to substrate. 3 residues coordinate Mg(2+): lysine 205, aspartate 207, and glutamate 208. Lysine 205 carries the post-translational modification N6-carboxylysine. Catalysis depends on histidine 297, which acts as the Proton acceptor. Substrate is bound by residues arginine 298, histidine 330, and serine 382.

This sequence belongs to the RuBisCO large chain family. Type I subfamily. As to quaternary structure, heterohexadecamer of 8 large chains and 8 small chains. Mg(2+) serves as cofactor.

The protein resides in the plastid. The protein localises to the chloroplast. It carries out the reaction 2 (2R)-3-phosphoglycerate + 2 H(+) = D-ribulose 1,5-bisphosphate + CO2 + H2O. The enzyme catalyses D-ribulose 1,5-bisphosphate + O2 = 2-phosphoglycolate + (2R)-3-phosphoglycerate + 2 H(+). RuBisCO catalyzes two reactions: the carboxylation of D-ribulose 1,5-bisphosphate, the primary event in carbon dioxide fixation, as well as the oxidative fragmentation of the pentose substrate in the photorespiration process. Both reactions occur simultaneously and in competition at the same active site. The sequence is that of Ribulose bisphosphate carboxylase large chain from Trieres chinensis (Marine centric diatom).